A 397-amino-acid polypeptide reads, in one-letter code: ATP-dependent RNA helicase eIF4A (397 aa).

Residues 23 to 51 (YKFDDLNLKPNIVRGIFGYGYETPSAIQQ) carry the Q motif motif. The Helicase ATP-binding domain occupies 54-224 (ILPITEGRDV…TKFMNNPVRI (171 aa)). An ATP-binding site is contributed by 67–74 (AQSGTGKT). Residues 172 to 175 (DEAD) carry the DEAD box motif. Residues 235 to 396 (GIKQFYINVE…EMPADIGALF (162 aa)) enclose the Helicase C-terminal domain.

It belongs to the DEAD box helicase family. eIF4A subfamily. In terms of assembly, component of the eIF4F complex, which composition varies with external and internal environmental conditions. It is composed of at least eIF4A, eIF4E and eIF4G.

It is found in the cytoplasm. It catalyses the reaction ATP + H2O = ADP + phosphate + H(+). ATP-dependent RNA helicase which is a subunit of the eIF4F complex involved in cap recognition and is required for mRNA binding to ribosome. In the current model of translation initiation, eIF4A unwinds RNA secondary structures in the 5'-UTR of mRNAs which is necessary to allow efficient binding of the small ribosomal subunit, and subsequent scanning for the initiator codon. This chain is ATP-dependent RNA helicase eIF4A (TIF1), found in Scheffersomyces stipitis (strain ATCC 58785 / CBS 6054 / NBRC 10063 / NRRL Y-11545) (Yeast).